A 375-amino-acid chain; its full sequence is Muconate cycloisomerase 1 (375 aa).

The active-site Proton acceptor is Lys171. The Mn(2+) site is built by Asp200, Glu226, and Asp251. The Proton donor role is filled by Glu329.

It belongs to the mandelate racemase/muconate lactonizing enzyme family. In terms of assembly, homooctamer. It depends on Mn(2+) as a cofactor.

The catalysed reaction is (S)-muconolactone = cis,cis-muconate + H(+). Its pathway is aromatic compound metabolism; beta-ketoadipate pathway; 5-oxo-4,5-dihydro-2-furylacetate from catechol: step 2/3. Its function is as follows. Catalyzes a syn cycloisomerization. The protein is Muconate cycloisomerase 1 (catB) of Pseudomonas putida (Arthrobacter siderocapsulatus).